Here is a 95-residue protein sequence, read N- to C-terminus: Small ribosomal subunit protein uS19 (95 aa).

The protein belongs to the universal ribosomal protein uS19 family.

Protein S19 forms a complex with S13 that binds strongly to the 16S ribosomal RNA. The polypeptide is Small ribosomal subunit protein uS19 (Roseiflexus castenholzii (strain DSM 13941 / HLO8)).